Here is a 265-residue protein sequence, read N- to C-terminus: 5'-nucleotidase SurE (265 aa).

4 residues coordinate a divalent metal cation: D8, D9, S39, and N96.

The protein belongs to the SurE nucleotidase family. The cofactor is a divalent metal cation.

The protein localises to the cytoplasm. It carries out the reaction a ribonucleoside 5'-phosphate + H2O = a ribonucleoside + phosphate. Functionally, nucleotidase that shows phosphatase activity on nucleoside 5'-monophosphates. In Dehalococcoides mccartyi (strain ATCC BAA-2266 / KCTC 15142 / 195) (Dehalococcoides ethenogenes (strain 195)), this protein is 5'-nucleotidase SurE.